Reading from the N-terminus, the 296-residue chain is Ribosomal protein L11 methyltransferase (296 aa).

Residues T146, G167, D189, and N231 each coordinate S-adenosyl-L-methionine.

The protein belongs to the methyltransferase superfamily. PrmA family.

The protein resides in the cytoplasm. The catalysed reaction is L-lysyl-[protein] + 3 S-adenosyl-L-methionine = N(6),N(6),N(6)-trimethyl-L-lysyl-[protein] + 3 S-adenosyl-L-homocysteine + 3 H(+). In terms of biological role, methylates ribosomal protein L11. The chain is Ribosomal protein L11 methyltransferase from Haemophilus influenzae (strain ATCC 51907 / DSM 11121 / KW20 / Rd).